Reading from the N-terminus, the 185-residue chain is MNWRSEHIWVELLKGSRKRGNFFWACILFLGSLGFLSVGISSYLGKNIISILPSQEILFFPQGVVMSFYGIAGLFISSYLWCTILWNVGSGYDRFDRKEGIVCIFRWGFPGIKRRVFLRFLMRDIQSIRIQVKEGLYPRRILYMEIRGQGIIPLTRTDDKFFTPREIEQKAAELAYFLRVPIEVF.

2 helical membrane passes run 21 to 43 (NFFWACILFLGSLGFLSVGISSY) and 63 to 85 (GVVMSFYGIAGLFISSYLWCTIL).

The protein belongs to the Ycf4 family.

It localises to the plastid. Its subcellular location is the chloroplast thylakoid membrane. Functionally, seems to be required for the assembly of the photosystem I complex. This Aegilops crassa (Persian goatgrass) protein is Photosystem I assembly protein Ycf4.